Reading from the N-terminus, the 191-residue chain is Transcription factor HES-2 (191 aa).

A disordered region spans residues M1–S26. The bHLH domain occupies L28–I85. An Orange domain is found at Y97–L130. Polar residues-rich tracts occupy residues R159–S173 and Q182–W191. Residues R159–W191 are disordered. Positions W188–W191 match the WRPW motif motif.

As to quaternary structure, transcription repression requires formation of a complex with a corepressor protein of the Groucho/TLE family. Homodimer, and heterodimer with the other bHLH proteins neurod1, neurod4/ath3, hes1/hairy1 and hes6r. Weakly interacts with the bHLH protein hey1/hrt1. In terms of tissue distribution, expressed in the animal half of the early cleavage stage embryo. During neurulation and organogenesis, the otic vesicles and retina are the main sites of expression; expression in otic placodes begins as early as stage 13.5, persisting in the otic vesicles at stage 30 and beyond. Also transiently expressed in the olfactory placodes. In addition, weakly expressed in primary neurons. Expression in the retina begins at stage 21, and is seen throughout the neural retina by stage 30. From stage 35 onwards, expression progressively declines in the central retina, while remaining high in the margins. At stage 41, expression becomes restricted to the ciliary marginal zone (CMZ) of the retina, the only region where retinogenesis is still occurring.

It is found in the nucleus. In terms of biological role, transcriptional repressor. Essential in the retina to govern glial versus neuronal differentiation. Promotes gliogenesis through the inhibition of neuronal differentiation by at least two distinct mechanisms; represses proneural gene transcription, and also physically interacts with proneural proteins, including neurod1. The chain is Transcription factor HES-2 (hes2) from Xenopus laevis (African clawed frog).